The following is a 360-amino-acid chain: UDP-3-O-acylglucosamine N-acyltransferase (360 aa).

The active-site Proton acceptor is the His253.

Belongs to the transferase hexapeptide repeat family. LpxD subfamily. Homotrimer.

It catalyses the reaction a UDP-3-O-[(3R)-3-hydroxyacyl]-alpha-D-glucosamine + a (3R)-hydroxyacyl-[ACP] = a UDP-2-N,3-O-bis[(3R)-3-hydroxyacyl]-alpha-D-glucosamine + holo-[ACP] + H(+). Its pathway is bacterial outer membrane biogenesis; LPS lipid A biosynthesis. Functionally, catalyzes the N-acylation of UDP-3-O-acylglucosamine using 3-hydroxyacyl-ACP as the acyl donor. Is involved in the biosynthesis of lipid A, a phosphorylated glycolipid that anchors the lipopolysaccharide to the outer membrane of the cell. The protein is UDP-3-O-acylglucosamine N-acyltransferase of Burkholderia multivorans (strain ATCC 17616 / 249).